The following is a 1397-amino-acid chain: MKDLLDIMRKKTDSDGHTPIEFDRIRIGLASPEMIKSWSHGEVKKPETINYRTFKPERDGLFCAKIFGPVKDYECLCGKYKRMKYKGVICEKCGVEVTTAKVRRERMGHIELASPVAHIWFLKSLPSRIGLLLDMTLRDIERVLYFESYVVTDPGMTPLEKYQLLTDEEYFNALEEHGDEFSAKMGAEAVQDLLKDIDLEAEISRLREEIPQTTSETKLKKASKRLKLMEAFKESNNKPEWMVMNVLPVLPPDLRPLVPLEGGRFATSDLNDLYRRVINRNNRLKRLLDLAAPDIIVRNEKRMLQESVDALLDNGRRGRAITGSNKRPLKSLADMIKGKQGRFRQNLLGKRVDYSGRSVITVGPTLRLHQCGLPKKMALELFKPFIFAKLQASGQATTIKAAKKMVERETPEVWDVLANVIRQHPVMLNRAPTLHRLGLQAFEPILIEGKAIRLHPLVCAAFNADFDGDQMAVHVPLTLEAQLEARALMMSTNNILSPANGEPIIVPSQDVVLGLYYITRDAVNAKGEGMMFADTHEVNRALATGQVAIHARVKVRVHQTVINEDGQREKQTIVVDTTPGRCLLWEVVPEGLSFEMINLEMTKKNISKLINSCYRKLGLKDTVIFADQLMYLGFRQATRSGVSVGMEDMVIPPQKQAIIDKAETEVREIEEQFEQGFVTAGERYNKVVDIWARTNDQVAKAMMDNLSFTNVKNKQGQDEKQKSFNSIYMMSDSGARGSAAQIRQLAGMRGLMAKPDGSIIETPIKANFREGLTVLQYFISTHGARKGLADTALKTANSGYLTRRLVDVAQDLVITEPDCGTMGGLVMTPFIQGGDVIEPLRDRVLGRVTAEDVRRASDNEIVLPRGTLIDEKIAAQLEEAGVDEVKVRSVIACESTFGVCAKCYGRDLARGHQVNPGESVGVMAAQSIGEPGTQLTMRTFHVGGAASRTSAANSVQVRNKGTVRFHNVKTVQHAKGHLVSVSRSGEIGIADELGRERERYKLPYGASILIKDGEAVEAGGIVATWDPHTHPLVTEVAGKARFSQIADGVTATSKTDDATGMTTVEILPVTARPASGKDLRPAIVLDTTDGGEQFYFLPQNTIVTVRDGETIGVGDVLGRVPQETSRTRDITGGLPRVADLFEARKPKEHAILAEVSGIVSFGKETKGKNRLVITPDDGSEIYEELIPKWRTINVFEGEHVNRGETISDGPQNPHDILRLKGEVALTNYIVNEVQDVYRLQGVKINDKHIEVIVRQMLRKVDITDGGDTSFIKGEQVDYIRVVQENQAVLAQNKFPAKFERQLMGITKASLSTDSFISAASFQETTRVLTEAAVTGKEDDLRGLKENVVVGRLIPAGTGLAYHLERRRQEAEAAEFELHNDFSEVDQAFSQALNQEQF.

Zn(2+)-binding residues include Cys-75, Cys-77, Cys-90, and Cys-93. Mg(2+) is bound by residues Asp-465, Asp-467, and Asp-469. Residues Cys-819, Cys-893, Cys-900, and Cys-903 each coordinate Zn(2+).

The protein belongs to the RNA polymerase beta' chain family. The RNAP catalytic core consists of 2 alpha, 1 beta, 1 beta' and 1 omega subunit. When a sigma factor is associated with the core the holoenzyme is formed, which can initiate transcription. Mg(2+) is required as a cofactor. Requires Zn(2+) as cofactor.

It catalyses the reaction RNA(n) + a ribonucleoside 5'-triphosphate = RNA(n+1) + diphosphate. In terms of biological role, DNA-dependent RNA polymerase catalyzes the transcription of DNA into RNA using the four ribonucleoside triphosphates as substrates. The sequence is that of DNA-directed RNA polymerase subunit beta' from Acinetobacter baylyi (strain ATCC 33305 / BD413 / ADP1).